The following is a 184-amino-acid chain: Endothelial cell-specific molecule 1 (184 aa).

The signal sequence occupies residues 1–21; it reads MKSLLLLTTLLIPLHLGMAWS. The IGFBP N-terminal domain occupies 24–102; it reads YAVDCPEHCD…GDEFGVCKDC (79 aa). 6 disulfide bridges follow: Cys28-Cys51, Cys32-Cys53, Cys37-Cys54, Cys43-Cys57, Cys65-Cys83, and Cys77-Cys99. Residues 145 to 184 are disordered; it reads RTSASQTERDAASGDGNAVREEIGDRNAARPSVMKWLNPR. Residues 151 to 172 show a composition bias toward basic and acidic residues; sequence TERDAASGDGNAVREEIGDRNA. The O-linked (Xyl...) (chondroitin sulfate) serine glycan is linked to Ser157.

Post-translationally, O-glycosylated; contains chondroitin sulfate and dermatan sulfate. In terms of tissue distribution, pineal gland specific.

The protein resides in the secreted. Its function is as follows. Involved in angiogenesis; promotes angiogenic sprouting. May have potent implications in lung endothelial cell-leukocyte interactions. This Rattus norvegicus (Rat) protein is Endothelial cell-specific molecule 1 (Esm1).